The following is a 149-amino-acid chain: L-alanine exporter AlaE (149 aa).

4 helical membrane passes run 16-36 (FAMVVYCSVVNMLIEIFLSGM), 46-66 (LVAIPVNILIAWPYGVYRDLI), 85-105 (VLAYVTFQSPVYIIILLTVGA), and 112-132 (AAVSSNIVVSMLMGAVYGYFL).

Belongs to the AlaE exporter family.

The protein resides in the cell inner membrane. Its function is as follows. Exports L-alanine. This chain is L-alanine exporter AlaE, found in Salmonella arizonae (strain ATCC BAA-731 / CDC346-86 / RSK2980).